The sequence spans 119 residues: Large ribosomal subunit protein bL20 (119 aa).

The protein belongs to the bacterial ribosomal protein bL20 family.

Functionally, binds directly to 23S ribosomal RNA and is necessary for the in vitro assembly process of the 50S ribosomal subunit. It is not involved in the protein synthesizing functions of that subunit. This is Large ribosomal subunit protein bL20 from Cellvibrio japonicus (strain Ueda107) (Pseudomonas fluorescens subsp. cellulosa).